We begin with the raw amino-acid sequence, 635 residues long: Threonine--tRNA ligase (635 aa).

Residues 1–61 form the TGS domain; it reads MPIITLPDGN…EKDANIAIIT (61 aa). Positions 242–533 are catalytic; the sequence is DHRKIGKQLD…LTEEYAGVYP (292 aa). C333, H384, and H510 together coordinate Zn(2+).

This sequence belongs to the class-II aminoacyl-tRNA synthetase family. As to quaternary structure, homodimer. It depends on Zn(2+) as a cofactor.

The protein resides in the cytoplasm. The enzyme catalyses tRNA(Thr) + L-threonine + ATP = L-threonyl-tRNA(Thr) + AMP + diphosphate + H(+). Functionally, catalyzes the attachment of threonine to tRNA(Thr) in a two-step reaction: L-threonine is first activated by ATP to form Thr-AMP and then transferred to the acceptor end of tRNA(Thr). Also edits incorrectly charged L-seryl-tRNA(Thr). The polypeptide is Threonine--tRNA ligase (Psychromonas ingrahamii (strain DSM 17664 / CCUG 51855 / 37)).